The following is a 68-amino-acid chain: ATP synthase F(0) complex subunit 8 (68 aa).

Residues 8 to 21 form a helical membrane-spanning segment; the sequence is VWPTMITPMLLTLF. An N6-acetyllysine; alternate modification is found at lysine 54. At lysine 54 the chain carries N6-succinyllysine; alternate. Residue lysine 57 is modified to N6-acetyllysine.

This sequence belongs to the ATPase protein 8 family. As to quaternary structure, component of the ATP synthase complex composed at least of ATP5F1A/subunit alpha, ATP5F1B/subunit beta, ATP5MC1/subunit c (homooctomer), MT-ATP6/subunit a, MT-ATP8/subunit 8, ATP5ME/subunit e, ATP5MF/subunit f, ATP5MG/subunit g, ATP5MK/subunit k, ATP5MJ/subunit j, ATP5F1C/subunit gamma, ATP5F1D/subunit delta, ATP5F1E/subunit epsilon, ATP5PF/subunit F6, ATP5PB/subunit b, ATP5PD/subunit d, ATP5PO/subunit OSCP. ATP synthase complex consists of a soluble F(1) head domain (subunits alpha(3) and beta(3)) - the catalytic core - and a membrane F(0) domain - the membrane proton channel (subunits c, a, 8, e, f, g, k and j). These two domains are linked by a central stalk (subunits gamma, delta, and epsilon) rotating inside the F1 region and a stationary peripheral stalk (subunits F6, b, d, and OSCP). Interacts with PRICKLE3.

It is found in the mitochondrion membrane. In terms of biological role, subunit 8, of the mitochondrial membrane ATP synthase complex (F(1)F(0) ATP synthase or Complex V) that produces ATP from ADP in the presence of a proton gradient across the membrane which is generated by electron transport complexes of the respiratory chain. ATP synthase complex consist of a soluble F(1) head domain - the catalytic core - and a membrane F(1) domain - the membrane proton channel. These two domains are linked by a central stalk rotating inside the F(1) region and a stationary peripheral stalk. During catalysis, ATP synthesis in the catalytic domain of F(1) is coupled via a rotary mechanism of the central stalk subunits to proton translocation. In vivo, can only synthesize ATP although its ATP hydrolase activity can be activated artificially in vitro. Part of the complex F(0) domain. This is ATP synthase F(0) complex subunit 8 from Homo sapiens (Human).